A 591-amino-acid polypeptide reads, in one-letter code: Aspartate--tRNA(Asp/Asn) ligase (591 aa).

Glutamate 174 provides a ligand contact to L-aspartate. The tract at residues glutamine 198–lysine 201 is aspartate. An L-aspartate-binding site is contributed by arginine 220. Residues arginine 220–glutamate 222 and glutamine 229 each bind ATP. Histidine 450 contributes to the L-aspartate binding site. Residue glutamate 483 participates in ATP binding. Arginine 490 provides a ligand contact to L-aspartate. Glycine 535–arginine 538 serves as a coordination point for ATP.

The protein belongs to the class-II aminoacyl-tRNA synthetase family. Type 1 subfamily. As to quaternary structure, homodimer.

It localises to the cytoplasm. It catalyses the reaction tRNA(Asx) + L-aspartate + ATP = L-aspartyl-tRNA(Asx) + AMP + diphosphate. Functionally, aspartyl-tRNA synthetase with relaxed tRNA specificity since it is able to aspartylate not only its cognate tRNA(Asp) but also tRNA(Asn). Reaction proceeds in two steps: L-aspartate is first activated by ATP to form Asp-AMP and then transferred to the acceptor end of tRNA(Asp/Asn). This is Aspartate--tRNA(Asp/Asn) ligase from Pseudomonas putida (strain ATCC 700007 / DSM 6899 / JCM 31910 / BCRC 17059 / LMG 24140 / F1).